The sequence spans 539 residues: Fucosyltransferase 2 (539 aa).

The Cytoplasmic segment spans residues 1–5; the sequence is MRITE. A helical; Signal-anchor for type II membrane protein transmembrane segment spans residues 6-26; it reads ILALFMVLVPVSLVIVAMFGY. The Lumenal segment spans residues 27–539; it reads DQGNGFVQAS…SWGLKLVDNF (513 aa). Residues N44, N231, and N482 are each glycosylated (N-linked (GlcNAc...) asparagine).

It belongs to the glycosyltransferase 37 family. Expressed in roots, stems, leaves, flowers, siliques and seedlings.

Its subcellular location is the golgi apparatus. The protein localises to the golgi stack membrane. It functions in the pathway protein modification; protein glycosylation. Functionally, may be involved in cell wall biosynthesis. May act as a fucosyltransferase. This Arabidopsis thaliana (Mouse-ear cress) protein is Fucosyltransferase 2 (FUT2).